A 413-amino-acid polypeptide reads, in one-letter code: NAD-dependent dihydropyrimidine dehydrogenase subunit PreT (413 aa).

E287 contacts NAD(+).

The protein belongs to the NADH dehydrogenase family. In terms of assembly, heterotetramer of 2 PreA and 2 PreT subunits.

The catalysed reaction is 5,6-dihydrouracil + NAD(+) = uracil + NADH + H(+). The enzyme catalyses 5,6-dihydrothymine + NAD(+) = thymine + NADH + H(+). Its function is as follows. Involved in pyrimidine base degradation. Catalyzes physiologically the reduction of uracil to 5,6-dihydrouracil (DHU) by using NADH as a specific cosubstrate. It also catalyzes the reverse reaction and the reduction of thymine to 5,6-dihydrothymine (DHT). This chain is NAD-dependent dihydropyrimidine dehydrogenase subunit PreT (preT), found in Salmonella typhimurium (strain LT2 / SGSC1412 / ATCC 700720).